The chain runs to 356 residues: CMP-sialic acid transporter 2 (356 aa).

Residues 1-24 (MEYRRVKDQESYDVVSQKDIESPG) are compositionally biased toward basic and acidic residues. The segment at 1-43 (MEYRRVKDQESYDVVSQKDIESPGERSLSSTSATSSLSTAGAS) is disordered. At 1–52 (MEYRRVKDQESYDVVSQKDIESPGERSLSSTSATSSLSTAGASKGNNSWKLK) the chain is on the cytoplasmic side. The span at 27–43 (SLSSTSATSSLSTAGAS) shows a compositional bias: low complexity. A helical transmembrane segment spans residues 53–73 (SIVTLALTLLTSSQAILIVWS). The Lumenal portion of the chain corresponds to 74-82 (KRAGKYEYS). The chain crosses the membrane as a helical span at residues 83-103 (VTTANFSVEALKCLLSLIALY). Residues 104–125 (RTWNSQGVTEDNRLSTSFDEVS) are Cytoplasmic-facing. The helical transmembrane segment at 126-146 (VYPIPAILYMVKNLLQYYIFA) threads the bilayer. The Lumenal segment spans residues 147 to 149 (YVD). The chain crosses the membrane as a helical span at residues 150-172 (APAYQILKNLNIISTGVLYRIIL). Topologically, residues 173–175 (KKK) are cytoplasmic. Residues 176–196 (LSEIQWAAFILLCAGCTTAQL) traverse the membrane as a helical segment. Over 197-211 (NPSSDHVLQTPIQGW) the chain is Lumenal. The helical transmembrane segment at 212-232 (VMAIVMALLSGFAGVYTEAII) threads the bilayer. Residues 233 to 239 (KKRPSRN) are Cytoplasmic-facing. A helical transmembrane segment spans residues 240–260 (INVQNFWLYIFGMLFNLVAIC). At 261–277 (VQDFDAVMNKGFFHGYS) the chain is on the lumenal side. Residues 278 to 298 (FITVLMILNHALSGIAVSMVM) traverse the membrane as a helical segment. The Cytoplasmic segment spans residues 299 to 314 (KYADNIVKVYSTSVAM). The helical transmembrane segment at 315-335 (LLTAVVSVFLFGFHLSLAFFL) threads the bilayer. Topologically, residues 336-356 (GSTVVSVSVYLHSVGKPQPQK) are lumenal.

This sequence belongs to the nucleotide-sugar transporter family. CMP-Sialate:CMP antiporter (TC 2.A.7.12) subfamily.

It localises to the golgi apparatus membrane. Sugar transporter involved in the transport of CMP-sialic acid from the cytoplasm into the Golgi. May transport important nucleotide sugars such as CMP-Kdo (2-keto-3-deoxy-D-manno-octulosonic acid) in physiological conditions. This is CMP-sialic acid transporter 2 from Oryza sativa subsp. indica (Rice).